Reading from the N-terminus, the 1015-residue chain is Fibronectin-binding protein A (1015 aa).

The N-terminal stretch at 1–36 (MKNNLRYGIRKHKLGAASVFLGTMIVVGMGQDKEAA) is a signal peptide. A YSIRK-G/S signaling motif motif is present at residues 7–18 (YGIRKHKLGAAS). Residues 37 to 512 (ASEQKTTTVE…SNKADGNGKN (476 aa)) form a ligand-binding A region region. Residues 75-92 (SYSATATEQPSNATQVTT) show a composition bias toward polar residues. Positions 75-199 (SYSATATEQP…KVETGTDVTS (125 aa)) are disordered. Basic and acidic residues predominate over residues 112–126 (TVKEEVVKEEAKPQV). Residues 129-139 (TTQSQDNSGDQ) are compositionally biased toward polar residues. Basic and acidic residues predominate over residues 179–193 (DVVEAKEASDEKVET). Residues 194–512 (GTDVTSKVTV…SNKADGNGKN (319 aa)) form a fibrinogen/elastin/tropoelastin-binding region. Residues 513 to 873 (GQIIQNNDFE…EGQQTIEEDT (361 aa)) are fibronectin-binding. A B-1 repeat occupies 546–575 (ENQDNTPLDIDYHTAIDGEGGYVDGYIETI). A 2 X approximate tandem repeats region spans residues 546-605 (ENQDNTPLDIDYHTAIDGEGGYVDGYIETIEETDSSAIDIDYHTAVDSEAGHVGGYTESS). The stretch at 576–605 (EETDSSAIDIDYHTAVDSEAGHVGGYTESS) is one B-2 repeat. 4 disordered regions span residues 596–623 (GHVG…NSKH), 741–815 (LGYE…IDFD), 828–953 (EIIE…GKVV), and 966–992 (VAPT…NKGM). A D-1 repeat occupies 746–783 (GQNSGNQSFEEDTEEDKPKYEQGGNIVDIDFDSVPQIQ). Residues 746-875 (GQNSGNQSFE…QQTIEEDTTP (130 aa)) form a 4 X approximate tandem repeats region. A compositionally biased stretch (polar residues) spans 780-791 (PQIQGQNNGNQS). One copy of the D-2 repeat lies at 784-821 (GQNNGNQSFEEDTEKDKPKYEQGGNIIDIDFDSVPQIH). Residues 822–860 (GFNKHTEIIEEDTNKDKPNYQFGGHNSVDFEEDTLPKVS) form a D-3 repeat. Residues 828–839 (EIIEEDTNKDKP) are compositionally biased toward basic and acidic residues. The stretch at 861 to 875 (GQNEGQQTIEEDTTP) is one D-4; truncated repeat. The span at 875–935 (PPTPPTPEVP…PAEPGKPVPP (61 aa)) shows a compositional bias: pro residues. WR repeat units lie at residues 876–889 (PTPP…EPET), 890–903 (PTPP…EPET), 904–917 (PTPP…EPET), 918–931 (PTPP…EPGK), and 932–945 (PVPP…KPSK). Residues 876–945 (PTPPTPEVPS…AKEEPKKPSK (70 aa)) form a 5 X tandem repeats, Pro-rich (WR) region. Residues 979–983 (LPETG) carry the LPXTG sorting signal motif. Residue T982 is modified to Pentaglycyl murein peptidoglycan amidated threonine. Residues 983-1015 (GGEESTNKGMLFGGLFSILGLALLRRNKKNNKA) constitute a propeptide, removed by sortase.

Its subcellular location is the secreted. The protein resides in the cell wall. Its function is as follows. Promotes bacterial attachment to multiple substrates, such as fibronectin (Fn), fibrinogen (Fg), elastin peptides and tropoelastin. This confers to S.aureus the ability to invade endothelial cells. Promotes adherence to and aggregation of activated platelets. The chain is Fibronectin-binding protein A (fnbA) from Staphylococcus aureus (strain MSSA476).